Reading from the N-terminus, the 45-residue chain is Photosystem II reaction center protein K (45 aa).

Positions 1 to 8 (METALLLA) are excised as a propeptide. The chain crosses the membrane as a helical span at residues 24 to 44 (LPLIPLFFLLLAFVWQASVGF).

The protein belongs to the PsbK family. In terms of assembly, PSII is composed of 1 copy each of membrane proteins PsbA, PsbB, PsbC, PsbD, PsbE, PsbF, PsbH, PsbI, PsbJ, PsbK, PsbL, PsbM, PsbT, PsbX, PsbY, PsbZ, Psb30/Ycf12, peripheral proteins PsbO, CyanoQ (PsbQ), PsbU, PsbV and a large number of cofactors. It forms dimeric complexes.

It is found in the cellular thylakoid membrane. In terms of biological role, one of the components of the core complex of photosystem II (PSII). PSII is a light-driven water:plastoquinone oxidoreductase that uses light energy to abstract electrons from H(2)O, generating O(2) and a proton gradient subsequently used for ATP formation. It consists of a core antenna complex that captures photons, and an electron transfer chain that converts photonic excitation into a charge separation. This chain is Photosystem II reaction center protein K, found in Microcystis aeruginosa (strain NIES-843 / IAM M-2473).